The primary structure comprises 1055 residues: MEASAGLVAGSHNRNELVLIRGHEEPKPLRALSGQVCEICGDEVGRTVDGDLFVACNECGFPVCRPCYEYERREGTQNCPQCKTRYKRLKGSPRVPGDEDEEDIDDLEHEFNIDDEKQKQLQQDQDGMQNSHITEAMLHGKMSYGRGPDDGDGNSTPLPPIITGARSVPVSGEFPISNSHGHGEFSSSLHKRIHPYPVSEPGSAKWDEKKEVSWKERMDDWKSKQGIVAGGAPDPDDYDADVPLNDEARQPLSRKVSIASSKVNPYRMVIILRLVVLGFFLRYRILHPVPDAIPLWLTSIICEIWFAVSWILDQFPKWYPIDRETYLDRLSLRYEREGEPSLLSAVDLFVSTVDPLKEPPLVTANTVLSILAVDYPVDKVSCYVSDDGASMLTFESLSETAEFARKWVPFCKKFSIEPRAPEFYFSQKVDYLKDKVHPNFVQERRAMKREYEEFKVRINALVAKAQKVPAEGWIMKDGTPWPGNNTRDHPGMIQVFLGHSGGHDTEGNELPRLVYVSREKRPGFQHHKKAGAMNALIRVSAVLTNAPFMLNLDCDHYINNSKAIREAMCFLMDPQVGRKVCYVQFPQRFDGIDVHDRYANRNTVFFDINMKGLDGIQGPVYVGTGCVFRRQALYGYNPPKGPKRPKMVTCDCCPCFGRKKRKHGKDGLPEAVAADGGMDSDKEMLMSQMNFEKRFGQSAAFVTSTLMEEGGVPPSSSPAALLKEAIHVISCGYEDKTDWGLELGWIYGSITEDILTGFKMHCRGWRSVYCMPKRAAFKGSAPINLSDRLNQVLRWALGSVEIFFSRHSPLLYGYKNGNLKWLERFSYINTTIYPFTSLPLLAYCTLPAVCLLTGKFIMPPISTFASLFFIALFISIFATGILEMRWSGVSIEEWWRNEQFWVIGGVSAHLFAVVQGLLKVLAGIDTNFTVTSKATGDEDDEFAELYAFKWTTLLIPPTTLLILNIIGVVAGVSDAINNGSEAWGPLFGKLFFAFWVIVHLYPFLKGLMGRQNRTPTIVVIWSVLLASIFSLLWVRIDPFTIKARGPDVRQCGINC.

Topologically, residues 1–268 (MEASAGLVAG…ASSKVNPYRM (268 aa)) are cytoplasmic. Positions 37, 40, 56, 59, 64, 67, 79, and 82 each coordinate Zn(2+). An RING-type; degenerate zinc finger spans residues 37-83 (CEICGDEVGRTVDGDLFVACNECGFPVCRPCYEYERREGTQNCPQCK). Residues 269–289 (VIILRLVVLGFFLRYRILHPV) form a helical membrane-spanning segment. Residues 290-291 (PD) are Extracellular-facing. Residues 292-312 (AIPLWLTSIICEIWFAVSWIL) form a helical membrane-spanning segment. Over 313 to 831 (DQFPKWYPID…LERFSYINTT (519 aa)) the chain is Cytoplasmic. UDP-alpha-D-glucose-binding residues include Ser-351, Lys-357, Glu-358, and Asp-387. Asp-387 is an active-site residue. Positions 439–468 (NFVQERRAMKREYEEFKVRINALVAKAQKV) form a coiled coil. Residue Lys-528 coordinates UDP-alpha-D-glucose. Mn(2+) contacts are provided by Lys-529 and Asp-553. Asp-753 is an active-site residue. A helical transmembrane segment spans residues 832 to 852 (IYPFTSLPLLAYCTLPAVCLL). The Extracellular segment spans residues 853 to 860 (TGKFIMPP). The helical transmembrane segment at 861-881 (ISTFASLFFIALFISIFATGI) threads the bilayer. At 882-899 (LEMRWSGVSIEEWWRNEQ) the chain is on the cytoplasmic side. Residues 900 to 920 (FWVIGGVSAHLFAVVQGLLKV) form a helical membrane-spanning segment. Over 921 to 951 (LAGIDTNFTVTSKATGDEDDEFAELYAFKWT) the chain is Extracellular. A glycan (N-linked (GlcNAc...) asparagine) is linked at Asn-927. The chain crosses the membrane as a helical span at residues 952–972 (TLLIPPTTLLILNIIGVVAGV). Over 973-983 (SDAINNGSEAW) the chain is Cytoplasmic. Residues 984–1004 (GPLFGKLFFAFWVIVHLYPFL) form a helical membrane-spanning segment. At 1005–1013 (KGLMGRQNR) the chain is on the extracellular side. The helical transmembrane segment at 1014–1034 (TPTIVVIWSVLLASIFSLLWV) threads the bilayer. Residues 1035–1055 (RIDPFTIKARGPDVRQCGINC) are Cytoplasmic-facing.

This sequence belongs to the glycosyltransferase 2 family. Plant cellulose synthase subfamily. It depends on Mn(2+) as a cofactor. Requires Zn(2+) as cofactor.

Its subcellular location is the cell membrane. The enzyme catalyses [(1-&gt;4)-beta-D-glucosyl](n) + UDP-alpha-D-glucose = [(1-&gt;4)-beta-D-glucosyl](n+1) + UDP + H(+). The protein operates within glycan metabolism; plant cellulose biosynthesis. Catalytic subunit of cellulose synthase terminal complexes ('rosettes'), required for beta-1,4-glucan microfibril crystallization, a major mechanism of the cell wall formation. Involved in the secondary cell wall formation. This chain is Cellulose synthase A catalytic subunit 9 [UDP-forming] (CESA9), found in Oryza sativa subsp. indica (Rice).